Here is a 249-residue protein sequence, read N- to C-terminus: Ribosomal RNA small subunit methyltransferase J (249 aa).

Residues 99–100 (RD), 115–116 (ER), 151–152 (SS), and aspartate 169 each bind S-adenosyl-L-methionine.

The protein belongs to the methyltransferase superfamily. RsmJ family.

The protein localises to the cytoplasm. It catalyses the reaction guanosine(1516) in 16S rRNA + S-adenosyl-L-methionine = N(2)-methylguanosine(1516) in 16S rRNA + S-adenosyl-L-homocysteine + H(+). Its function is as follows. Specifically methylates the guanosine in position 1516 of 16S rRNA. The chain is Ribosomal RNA small subunit methyltransferase J from Shewanella oneidensis (strain ATCC 700550 / JCM 31522 / CIP 106686 / LMG 19005 / NCIMB 14063 / MR-1).